The primary structure comprises 572 residues: Urease subunit alpha (572 aa).

Positions 136–572 constitute a Urease domain; that stretch reads GGIDTHIHFI…VPLGQRYFLF (437 aa). Positions 141, 143, and 224 each coordinate Ni(2+). Position 224 is an N6-carboxylysine (lysine 224). Histidine 226 is a binding site for substrate. Ni(2+)-binding residues include histidine 253 and histidine 279. Histidine 327 acts as the Proton donor in catalysis. Aspartate 367 is a Ni(2+) binding site.

The protein belongs to the metallo-dependent hydrolases superfamily. Urease alpha subunit family. In terms of assembly, heterotrimer of UreA (gamma), UreB (beta) and UreC (alpha) subunits. Three heterotrimers associate to form the active enzyme. Ni cation is required as a cofactor. Carboxylation allows a single lysine to coordinate two nickel ions.

It localises to the cytoplasm. It carries out the reaction urea + 2 H2O + H(+) = hydrogencarbonate + 2 NH4(+). It participates in nitrogen metabolism; urea degradation; CO(2) and NH(3) from urea (urease route): step 1/1. In Haemophilus influenzae (strain 86-028NP), this protein is Urease subunit alpha.